The sequence spans 508 residues: UDP-N-acetylmuramoyl-L-alanyl-D-glutamate--2,6-diaminopimelate ligase (508 aa).

Ser43 is a UDP-N-acetyl-alpha-D-muramoyl-L-alanyl-D-glutamate binding site. Residue 124–130 (GTNGKTT) participates in ATP binding. Residues 166 to 167 (TT), Ser193, and Arg201 each bind UDP-N-acetyl-alpha-D-muramoyl-L-alanyl-D-glutamate. The residue at position 233 (Lys233) is an N6-carboxylysine. Meso-2,6-diaminopimelate contacts are provided by residues Arg404, 428 to 431 (DNPR), Gly478, and Glu482. The Meso-diaminopimelate recognition motif motif lies at 428-431 (DNPR).

The protein belongs to the MurCDEF family. MurE subfamily. The cofactor is Mg(2+). In terms of processing, carboxylation is probably crucial for Mg(2+) binding and, consequently, for the gamma-phosphate positioning of ATP.

The protein localises to the cytoplasm. It catalyses the reaction UDP-N-acetyl-alpha-D-muramoyl-L-alanyl-D-glutamate + meso-2,6-diaminopimelate + ATP = UDP-N-acetyl-alpha-D-muramoyl-L-alanyl-gamma-D-glutamyl-meso-2,6-diaminopimelate + ADP + phosphate + H(+). The protein operates within cell wall biogenesis; peptidoglycan biosynthesis. In terms of biological role, catalyzes the addition of meso-diaminopimelic acid to the nucleotide precursor UDP-N-acetylmuramoyl-L-alanyl-D-glutamate (UMAG) in the biosynthesis of bacterial cell-wall peptidoglycan. This is UDP-N-acetylmuramoyl-L-alanyl-D-glutamate--2,6-diaminopimelate ligase from Chlorobaculum tepidum (strain ATCC 49652 / DSM 12025 / NBRC 103806 / TLS) (Chlorobium tepidum).